A 419-amino-acid chain; its full sequence is UDP-N-acetylglucosamine 1-carboxyvinyltransferase (419 aa).

22 to 23 lines the phosphoenolpyruvate pocket; sequence KN. Arginine 93 contacts UDP-N-acetyl-alpha-D-glucosamine. Cysteine 117 functions as the Proton donor in the catalytic mechanism. Residue cysteine 117 is modified to 2-(S-cysteinyl)pyruvic acid O-phosphothioketal. UDP-N-acetyl-alpha-D-glucosamine-binding residues include aspartate 306 and isoleucine 328.

The protein belongs to the EPSP synthase family. MurA subfamily.

It localises to the cytoplasm. It carries out the reaction phosphoenolpyruvate + UDP-N-acetyl-alpha-D-glucosamine = UDP-N-acetyl-3-O-(1-carboxyvinyl)-alpha-D-glucosamine + phosphate. It participates in cell wall biogenesis; peptidoglycan biosynthesis. Functionally, cell wall formation. Adds enolpyruvyl to UDP-N-acetylglucosamine. This Ruthia magnifica subsp. Calyptogena magnifica protein is UDP-N-acetylglucosamine 1-carboxyvinyltransferase.